A 356-amino-acid polypeptide reads, in one-letter code: D-alanine--D-alanine ligase (356 aa).

Residues 134-339 (KQLFEHRGLP…YPELITKLIE (206 aa)) form the ATP-grasp domain. 167-222 (NDKLNYPVFVKPANLGSSVGISKCNNEAELKEGIKEAFQFDRKLVIEQGVNAREIE) is an ATP binding site. The Mg(2+) site is built by D293, E306, and N308.

Belongs to the D-alanine--D-alanine ligase family. It depends on Mg(2+) as a cofactor. Requires Mn(2+) as cofactor.

The protein localises to the cytoplasm. The enzyme catalyses 2 D-alanine + ATP = D-alanyl-D-alanine + ADP + phosphate + H(+). The protein operates within cell wall biogenesis; peptidoglycan biosynthesis. Its function is as follows. Cell wall formation. This Staphylococcus aureus (strain Mu3 / ATCC 700698) protein is D-alanine--D-alanine ligase.